Reading from the N-terminus, the 327-residue chain is Auxin-responsive protein IAA18 (327 aa).

3 disordered regions span residues 26–45 (VKEADGEGSRNTNLDADEDK), 52–98 (GLPG…IGTT), and 180–202 (NLTNGSSFKQSPERQNDEADDKA). An EAR-like (transcriptional repression) motif is present at residues 49-53 (LKLGL). Over residues 58-69 (QEERAADSREKI) the composition is skewed to basic and acidic residues. The span at 70–82 (QQQQRESSSEPSI) shows a compositional bias: low complexity. A compositionally biased stretch (polar residues) spans 180–189 (NLTNGSSFKQ). Residues 190-202 (SPERQNDEADDKA) show a composition bias toward basic and acidic residues. Positions 209 to 313 (RPLVKINMDG…TVKRLRVMRR (105 aa)) constitute a PB1 domain.

The protein belongs to the Aux/IAA family. As to quaternary structure, homodimers and heterodimers. Highly expressed in flowers. Expressed in roots and etiolated seedlings.

The protein localises to the nucleus. In terms of biological role, aux/IAA proteins are short-lived transcriptional factors that function as repressors of early auxin response genes at low auxin concentrations. The chain is Auxin-responsive protein IAA18 (IAA18) from Oryza sativa subsp. japonica (Rice).